Consider the following 183-residue polypeptide: ATP synthase subunit delta (183 aa).

The protein belongs to the ATPase delta chain family. F-type ATPases have 2 components, F(1) - the catalytic core - and F(0) - the membrane proton channel. F(1) has five subunits: alpha(3), beta(3), gamma(1), delta(1), epsilon(1). F(0) has three main subunits: a(1), b(2) and c(10-14). The alpha and beta chains form an alternating ring which encloses part of the gamma chain. F(1) is attached to F(0) by a central stalk formed by the gamma and epsilon chains, while a peripheral stalk is formed by the delta and b chains.

The protein localises to the cell membrane. In terms of biological role, f(1)F(0) ATP synthase produces ATP from ADP in the presence of a proton or sodium gradient. F-type ATPases consist of two structural domains, F(1) containing the extramembraneous catalytic core and F(0) containing the membrane proton channel, linked together by a central stalk and a peripheral stalk. During catalysis, ATP synthesis in the catalytic domain of F(1) is coupled via a rotary mechanism of the central stalk subunits to proton translocation. Its function is as follows. This protein is part of the stalk that links CF(0) to CF(1). It either transmits conformational changes from CF(0) to CF(1) or is implicated in proton conduction. This is ATP synthase subunit delta from Mycoplasmopsis synoviae (strain 53) (Mycoplasma synoviae).